A 702-amino-acid chain; its full sequence is uncharacterized protein (702 aa).

5 stretches are compositionally biased toward low complexity: residues 306-384 (NNNN…NNNN), 488-511 (PTKT…TNIT), 559-590 (QQSQ…NNNN), 603-612 (SNQNSNNNNQ), and 621-639 (NNNN…NNNN). 3 disordered regions span residues 306 to 385 (NNNN…NNNE), 488 to 513 (PTKT…ITYG), and 551 to 645 (STMN…NSRY). Residues 337-489 (NNINNNINNN…IKSLDILSPT (153 aa)) form the VPS9 domain.

This is an uncharacterized protein from Dictyostelium discoideum (Social amoeba).